The sequence spans 64 residues: Large ribosomal subunit protein bL35 (64 aa).

Residues 1–23 (MPKMKTKSGAAKRFKKTANGFKH) are disordered.

This sequence belongs to the bacterial ribosomal protein bL35 family.

The chain is Large ribosomal subunit protein bL35 from Stutzerimonas stutzeri (strain A1501) (Pseudomonas stutzeri).